The chain runs to 433 residues: MERYKVIREIGDGTCGNVFRAYNTETNEIVAVKKMKRKFFQWEECISLREVKALQKLNHPNIVKLKEVTMENHELFFIFENMECNLYDVIRERQAAFSEEEIRNFMVQILQGLAYMHNNGYFHRDLKPENLLVTDGTVKIADFGLAREVSSSPPYTDYVSTRWYRAPEVLLQSSAYTPAIDMWAVGAILAELFTLSPLFPGGSETDQLYKICAVLGTPDHTVWPEGMNLPRSSSFNFFQIPPRNLWELIPNATLEAIDLIQQLCSWDPRRRPTAEQSLQHPFFNVGNWVPRPLHASHTKTIETRPNPRLELNLWDFGTEPEDNYLDLTLSLKPSFPGTDFSNNVPEHTKEEILLYPGFENPPVQSGFWPLVASDRPMGDVPAMSSWPQAYVVDGQATLPAVGFSGSPFGLSPLQPNLFENRSFATPIRQVNFF.

The Protein kinase domain maps to 4 to 283 (YKVIREIGDG…AEQSLQHPFF (280 aa)). Residues 10-18 (IGDGTCGNV) and Lys-33 each bind ATP. Asp-125 serves as the catalytic Proton acceptor. Phosphoserine is present on Ser-151. Position 156 is a phosphothreonine (Thr-156).

Belongs to the protein kinase superfamily. CMGC Ser/Thr protein kinase family. CDC2/CDKX subfamily.

It catalyses the reaction L-seryl-[protein] + ATP = O-phospho-L-seryl-[protein] + ADP + H(+). The catalysed reaction is L-threonyl-[protein] + ATP = O-phospho-L-threonyl-[protein] + ADP + H(+). It carries out the reaction [DNA-directed RNA polymerase] + ATP = phospho-[DNA-directed RNA polymerase] + ADP + H(+). The protein is Cyclin-dependent kinase F-3 (CDKF-3) of Oryza sativa subsp. japonica (Rice).